The primary structure comprises 459 residues: Phosphoglucosamine mutase (459 aa).

Serine 106 acts as the Phosphoserine intermediate in catalysis. Serine 106, aspartate 247, aspartate 249, and aspartate 251 together coordinate Mg(2+). Serine 106 bears the Phosphoserine mark.

It belongs to the phosphohexose mutase family. Requires Mg(2+) as cofactor. In terms of processing, activated by phosphorylation.

It carries out the reaction alpha-D-glucosamine 1-phosphate = D-glucosamine 6-phosphate. In terms of biological role, catalyzes the conversion of glucosamine-6-phosphate to glucosamine-1-phosphate. The sequence is that of Phosphoglucosamine mutase from Chlamydia muridarum (strain MoPn / Nigg).